Reading from the N-terminus, the 187-residue chain is Ribosome-recycling factor (187 aa).

It belongs to the RRF family.

It localises to the cytoplasm. Responsible for the release of ribosomes from messenger RNA at the termination of protein biosynthesis. May increase the efficiency of translation by recycling ribosomes from one round of translation to another. The protein is Ribosome-recycling factor of Flavobacterium psychrophilum (strain ATCC 49511 / DSM 21280 / CIP 103535 / JIP02/86).